Here is a 54-residue protein sequence, read N- to C-terminus: MSNGTAVMGKINNKKTHITCRRCGHHTYNVRTKRCSHCGFPAPRIRSYKWAKAK.

Cys20, Cys23, Cys35, and Cys38 together coordinate Zn(2+). The C4-type zinc-finger motif lies at 20-38 (CRRCGHHTYNVRTKRCSHC).

It belongs to the eukaryotic ribosomal protein eL37 family. Zn(2+) serves as cofactor.

Its function is as follows. Binds to the 23S rRNA. The protein is Large ribosomal subunit protein eL37 (rpl37e) of Thermoplasma volcanium (strain ATCC 51530 / DSM 4299 / JCM 9571 / NBRC 15438 / GSS1).